A 618-amino-acid chain; its full sequence is UvrABC system protein C (618 aa).

The 79-residue stretch at 15–93 (RTPGVYLMKD…IKEHHPRYNI (79 aa)) folds into the GIY-YIG domain. In terms of domain architecture, UVR spans 203-238 (NNLLRELRERMKMAAEQMNYEEAAFLRDRIRAIEET).

The protein belongs to the UvrC family. Interacts with UvrB in an incision complex.

It localises to the cytoplasm. Functionally, the UvrABC repair system catalyzes the recognition and processing of DNA lesions. UvrC both incises the 5' and 3' sides of the lesion. The N-terminal half is responsible for the 3' incision and the C-terminal half is responsible for the 5' incision. This chain is UvrABC system protein C, found in Syntrophus aciditrophicus (strain SB).